We begin with the raw amino-acid sequence, 58 residues long: 6.8 kDa protein (58 aa).

In Satellite tobacco mosaic virus (STMV), this protein is 6.8 kDa protein.